Consider the following 325-residue polypeptide: MAQFAPGVFRTLHGLFAVYKPPGVHWKSVRDTVETNLLKELNALKQRPPRQQIRFLPAGTEGSNGLEVTRVPSAVPVLADHVLVKGPAFTHIRVGTGHRLDIQSSGVFVLGIGHGNKLLKDMYNSHFTRDYTVRGMLGKATEDFTELGKTIEKTTYDHITREKLERILAVIQGTNQKALITHSHLDLQSQEAYDLAVQGKLRPMVKSPPIILGIRCLEFSPPEFTLEIQCMHETQQYLRKMIHEIGLELRSSAVCTQVRRSRDGPFTVDCSLLRTQWDLGSIQGAIRECRAQTEGVSRGNPDREAAEGPIPGPSRGAEGEGELRA.

Asp101 serves as the catalytic Nucleophile. The tract at residues 292 to 325 is disordered; that stretch reads QTEGVSRGNPDREAAEGPIPGPSRGAEGEGELRA.

Belongs to the pseudouridine synthase TruB family.

It is found in the mitochondrion matrix. The enzyme catalyses a uridine in mRNA = a pseudouridine in mRNA. It catalyses the reaction uridine(55) in tRNA = pseudouridine(55) in tRNA. In terms of biological role, minor enzyme contributing to the isomerization of uridine to pseudouridine (pseudouridylation) of specific mitochondrial mRNAs (mt-mRNAs) such as COXI and COXIII mt-mRNAs, modulating the efficiency of mitochondrial protein synthesis without changes in transcript abundance or stability. Also catalyzes pseudouridylation of some tRNAs, including synthesis of pseudouridine(55) from uracil-55, in the psi GC loop of a subset of tRNAs. The protein is Pseudouridylate synthase TRUB2, mitochondrial of Xenopus tropicalis (Western clawed frog).